A 2128-amino-acid chain; its full sequence is Non-reducing polyketide synthase albA (2128 aa).

Residues 8 to 244 (YLFGDQTSDI…VKAPIHGPYH (237 aa)) are N-terminal acylcarrier protein transacylase domain (SAT). Positions 375–806 (NSKIAIIGMS…GGNTALLLED (432 aa)) constitute a Ketosynthase family 3 (KS3) domain. Residues C547, H682, and H724 each act as for beta-ketoacyl synthase activity in the active site. The interval 912 to 1232 (FVFTGQGAQY…LASLHLAGID (321 aa)) is malonyl-CoA:ACP transacylase (MAT) domain. Catalysis depends on S1001, which acts as the For acyl/malonyl transferase activity. The tract at residues 1286 to 1425 (HEYLTTAAQK…CTVRFFDCAA (140 aa)) is N-terminal hotdog fold. The PKS/mFAS DH domain maps to 1286-1598 (HEYLTTAAQK…FQALSRKILD (313 aa)). The tract at residues 1290 to 1603 (TTAAQKVIET…RKILDTVLPP (314 aa)) is product template (PT) domain. The active-site Proton acceptor; for dehydratase activity is H1326. The segment at 1452–1598 (DAHRLGRGMV…FQALSRKILD (147 aa)) is C-terminal hotdog fold. D1511 acts as the Proton donor; for dehydratase activity in catalysis. The 78-residue stretch at 1618–1695 (PSAPSLVKRA…DFKQFLAPMS (78 aa)) folds into the Carrier 1 domain. S1655 carries the O-(pantetheine 4'-phosphoryl)serine modification. Positions 1695–1740 (SQGEASDGSTSDPESSSSFNGGSSTDESSAGSPVSSPPNEKVTQVE) are disordered. Low complexity predominate over residues 1700–1723 (SDGSTSDPESSSSFNGGSSTDESS). The segment covering 1724–1740 (AGSPVSSPPNEKVTQVE) has biased composition (polar residues). Residues 1739–1816 (VEQHATIKEI…DVEDALGLKP (78 aa)) enclose the Carrier 2 domain. S1776 bears the O-(pantetheine 4'-phosphoryl)serine mark. The tract at residues 1854–2126 (SPHPRSTSIL…ELGSFIGNAM (273 aa)) is claisen cyclase domain. Catalysis depends on S1944, which acts as the For Claisen cyclase activity.

The enzyme catalyses 6 malonyl-CoA + acetyl-CoA + 6 H(+) = naphtopyrone YWA1 + 6 CO2 + 7 CoA + H2O. It functions in the pathway secondary metabolite biosynthesis. Its function is as follows. Non-reducing polyketide synthase; part of the gene cluster that mediates the biosynthesis of aurasperone B, a dimeric gamma-naphthopyrone. The first step in the biosynthesis of aurasperone B is the production of gamma-naphthopyrone precursor YWA1 by the non-reducing polyketide synthase albA, via condensation of one acetyl-CoA starter unit with 6 malonyl-CoA units. YWA1 is then methylated by aunE at position C-6 to yield foncesin which is further methylated at position C-8 by aunD to produce fonsecin B. A key enzyme in the biosynthetic pathway is the cytochrome P450 monooxygenase aunB which catalyzes the oxidative dimerization of fonsecin B to aurasperone B. AunB also catalyzes the oxidative dimerization of rubrofusarin B into aurasperone A. The sequence is that of Non-reducing polyketide synthase albA from Aspergillus niger (strain ATCC 1015 / CBS 113.46 / FGSC A1144 / LSHB Ac4 / NCTC 3858a / NRRL 328 / USDA 3528.7).